Here is a 214-residue protein sequence, read N- to C-terminus: Thymidylate kinase (214 aa).

9–16 (GIEGCGKT) provides a ligand contact to ATP.

It belongs to the thymidylate kinase family.

It carries out the reaction dTMP + ATP = dTDP + ADP. Functionally, phosphorylation of dTMP to form dTDP in both de novo and salvage pathways of dTTP synthesis. The chain is Thymidylate kinase from Geotalea daltonii (strain DSM 22248 / JCM 15807 / FRC-32) (Geobacter daltonii).